The primary structure comprises 260 residues: MLLLVDAGNTRIKWALVDRSAPEQTPGKWLQQGSVARAEAGTLIEAWRGFSIGRVMLSNVAGHELRGELERAVLHTLGTRPVALEWFASAAELGGVRNRYLNPTQLGADRFAAAIGAHALFPEGPLVVATCGTATTVDALSAGGEFIGGMILPGLGLMASSLAKNTAQLPQVALQSTLTQPFADNTDAAIVSGCLAAQAGAIERAVAAQMRTYPNLPIPCILAGGAADLIAPHLSIDYTRVDNLVLIGLHTVAIQHSPTC.

6 to 13 (DAGNTRIK) contributes to the ATP binding site. Residues Y100 and 107-110 (GADR) contribute to the substrate site. Residue D109 is the Proton acceptor of the active site. T133 contributes to the ATP binding site. T186 is a binding site for substrate.

Belongs to the type III pantothenate kinase family. As to quaternary structure, homodimer. NH4(+) serves as cofactor. K(+) is required as a cofactor.

Its subcellular location is the cytoplasm. It catalyses the reaction (R)-pantothenate + ATP = (R)-4'-phosphopantothenate + ADP + H(+). It participates in cofactor biosynthesis; coenzyme A biosynthesis; CoA from (R)-pantothenate: step 1/5. Functionally, catalyzes the phosphorylation of pantothenate (Pan), the first step in CoA biosynthesis. This chain is Type III pantothenate kinase, found in Janthinobacterium sp. (strain Marseille) (Minibacterium massiliensis).